The primary structure comprises 331 residues: Eukaryotic translation initiation factor 3 subunit I (331 aa).

WD repeat units follow at residues 8–47 (LHER…RIGS), 49–88 (QCGG…QLDS), 142–181 (SPQC…LIKT), 184–223 (DHNK…LLRT), and 281–320 (GHIG…FEFD).

It belongs to the eIF-3 subunit I family. In terms of assembly, component of the eukaryotic translation initiation factor 3 (eIF-3) complex.

It localises to the cytoplasm. Component of the eukaryotic translation initiation factor 3 (eIF-3) complex, which is involved in protein synthesis of a specialized repertoire of mRNAs and, together with other initiation factors, stimulates binding of mRNA and methionyl-tRNAi to the 40S ribosome. The eIF-3 complex specifically targets and initiates translation of a subset of mRNAs involved in cell proliferation. The sequence is that of Eukaryotic translation initiation factor 3 subunit I (eif3I) from Dictyostelium discoideum (Social amoeba).